The following is a 94-amino-acid chain: Evasin P1086 (94 aa).

The N-terminal stretch at 1 to 28 is a signal peptide; the sequence is MAFNVITFLQLAVFVVILFNINLHSASA. Intrachain disulfides connect cysteine 48/cysteine 67, cysteine 52/cysteine 69, and cysteine 63/cysteine 80. The N-linked (GlcNAc...) asparagine glycan is linked to asparagine 74.

It is found in the secreted. Functionally, salivary chemokine-binding protein which binds to host chemokines CXCL1, CXCL2, CXCL3, CXCL5, CXCL6, CXCL10, CXCL12 and CXCL13. The chain is Evasin P1086 from Ixodes ricinus (Common tick).